We begin with the raw amino-acid sequence, 668 residues long: RING finger protein 214 (668 aa).

Disordered stretches follow at residues 1–87 (MAAS…AHEE) and 103–125 (NGSQ…TSLR). Residue A2 is modified to N-acetylalanine. A phosphoserine mark is found at S15, S40, S48, and S54. Residues 43–59 (KQKNLSPPSVSSQMITK) show a composition bias toward polar residues. The segment covering 60–71 (ESNRNAHLEHPE) has biased composition (basic and acidic residues). S196 carries the post-translational modification Phosphoserine. Positions 220–379 (QDIEKNLDKM…AEKEAELHLT (160 aa)) form a coiled coil. The tract at residues 486-552 (FPILNPALSQ…SSETPRPQPV (67 aa)) is disordered. Phosphoserine occurs at positions 497, 511, and 516. Residues 523 to 536 (PHMPPAASIPPPPG) are compositionally biased toward pro residues. An RING-type; atypical zinc finger spans residues 623 to 665 (CLMCQKLVQPSELHPMACTHALHKECIKFWAQTNTNDTCPFCP).

The protein is RING finger protein 214 (Rnf214) of Mus musculus (Mouse).